The following is a 374-amino-acid chain: MEKNEISEERRTQEKEKQHGHRLNIRRLGRKELTELLTRLGEPAYRANQLHRWLYSNQALRFEEMSTLSKQLRQKLASEWIIHPASLVGTERETTDASLVTGNPTAKFLIKLEDNELVESVLIPSEERITACISSQIGCPLRCTFCATGHMGFRRNLTASEITDQVFLLEKEAQKRHWRGLTNIVFMGMGEPLLNLDNVLESIGTLTEKDYQFSISERKITISTVGLPVEMDRIARSGLKTKLAISLHSADQLIRERMMPIAADITLDKLAKAINSYNSVTSQPVTLVYMLLEGINDSPEDARKLVRFAKRVLCKINLIDYNSIVTLKFKPGCSSSKTMFIQQLLDAGLLVTVRKSQGATINAACGQLATRPVR.

The span at 1 to 17 shows a compositional bias: basic and acidic residues; the sequence is MEKNEISEERRTQEKEK. Residues 1-22 form a disordered region; the sequence is MEKNEISEERRTQEKEKQHGHR. E119 functions as the Proton acceptor in the catalytic mechanism. One can recognise a Radical SAM core domain in the interval 125–360; it reads SEERITACIS…VTVRKSQGAT (236 aa). C132 and C365 form a disulfide bridge. [4Fe-4S] cluster is bound by residues C139, C143, and C146. Residues 190-191, S223, 246-248, and N322 each bind S-adenosyl-L-methionine; these read GE and SLH. The S-methylcysteine intermediate role is filled by C365.

Belongs to the radical SAM superfamily. RlmN family. Requires [4Fe-4S] cluster as cofactor.

The protein localises to the cytoplasm. It carries out the reaction adenosine(2503) in 23S rRNA + 2 reduced [2Fe-2S]-[ferredoxin] + 2 S-adenosyl-L-methionine = 2-methyladenosine(2503) in 23S rRNA + 5'-deoxyadenosine + L-methionine + 2 oxidized [2Fe-2S]-[ferredoxin] + S-adenosyl-L-homocysteine. The enzyme catalyses adenosine(37) in tRNA + 2 reduced [2Fe-2S]-[ferredoxin] + 2 S-adenosyl-L-methionine = 2-methyladenosine(37) in tRNA + 5'-deoxyadenosine + L-methionine + 2 oxidized [2Fe-2S]-[ferredoxin] + S-adenosyl-L-homocysteine. Specifically methylates position 2 of adenine 2503 in 23S rRNA and position 2 of adenine 37 in tRNAs. The protein is Probable dual-specificity RNA methyltransferase RlmN of Chlorobaculum tepidum (strain ATCC 49652 / DSM 12025 / NBRC 103806 / TLS) (Chlorobium tepidum).